A 487-amino-acid polypeptide reads, in one-letter code: ATP-dependent 6-phosphofructokinase (487 aa).

Residues G107, 173 to 174 (RG), 198 to 201 (GDGT), and K226 contribute to the ATP site. D199 provides a ligand contact to Mg(2+). Substrate contacts are provided by residues 227 to 229 (TID), 272 to 274 (MGR), and E325. Catalysis depends on D229, which acts as the Proton acceptor. 341–343 (SGN) is a binding site for ATP. Residue 380 to 383 (YMIR) participates in substrate binding. Residues 485-487 (AKL) carry the Peroxisomal targeting signal motif.

The protein belongs to the phosphofructokinase type A (PFKA) family. PPi-dependent PFK group II subfamily. Atypical ATP-dependent clade 'X' sub-subfamily. In terms of assembly, homotetramer. Mg(2+) is required as a cofactor.

Its subcellular location is the glycosome. The catalysed reaction is beta-D-fructose 6-phosphate + ATP = beta-D-fructose 1,6-bisphosphate + ADP + H(+). The protein operates within carbohydrate degradation; glycolysis; D-glyceraldehyde 3-phosphate and glycerone phosphate from D-glucose: step 3/4. Its activity is regulated as follows. Allosterically activated by AMP. Its function is as follows. Catalyzes the phosphorylation of D-fructose 6-phosphate to fructose 1,6-bisphosphate by ATP, the first committing step of glycolysis. The sequence is that of ATP-dependent 6-phosphofructokinase from Trypanosoma brucei brucei.